The chain runs to 1082 residues: Putative white-brown complex homolog protein 30 (1082 aa).

2 helical membrane-spanning segments follow: residues 12 to 32 (HIFL…SLDG) and 292 to 312 (NIHA…IMVY). The segment covering 329–348 (SREAAARHAKETTQARERWK) has biased composition (basic and acidic residues). The tract at residues 329–437 (SREAAARHAK…QAPKGKQLHT (109 aa)) is disordered. The 243-residue stretch at 484–726 (VAFKDLTLTL…FADIGITVPD (243 aa)) folds into the ABC transporter domain. 518-525 (GPSGAGKT) is an ATP binding site. The 198-residue stretch at 832 to 1029 (RQYRYFVGRV…TLEAFVLSNA (198 aa)) folds into the ABC transmembrane type-2 domain. The next 5 membrane-spanning stretches (helical) occupy residues 853-873 (ALDF…AKVN), 877-897 (IDTL…KISA), 958-978 (YIVL…FAIL), 979-999 (YSPS…TLIA), and 1054-1074 (WILC…IAYF).

It belongs to the ABC transporter superfamily. ABCG family. Eye pigment precursor importer (TC 3.A.1.204) subfamily.

It localises to the membrane. This is Putative white-brown complex homolog protein 30 (WBC30) from Arabidopsis thaliana (Mouse-ear cress).